A 279-amino-acid polypeptide reads, in one-letter code: Acyl-[acyl-carrier-protein]--UDP-N-acetylglucosamine O-acyltransferase (279 aa).

The interval 260–279 (AAKEAFQEESVDKEGALVES) is disordered.

Belongs to the transferase hexapeptide repeat family. LpxA subfamily. As to quaternary structure, homotrimer.

The protein localises to the cytoplasm. It catalyses the reaction a (3R)-hydroxyacyl-[ACP] + UDP-N-acetyl-alpha-D-glucosamine = a UDP-3-O-[(3R)-3-hydroxyacyl]-N-acetyl-alpha-D-glucosamine + holo-[ACP]. Its pathway is glycolipid biosynthesis; lipid IV(A) biosynthesis; lipid IV(A) from (3R)-3-hydroxytetradecanoyl-[acyl-carrier-protein] and UDP-N-acetyl-alpha-D-glucosamine: step 1/6. In terms of biological role, involved in the biosynthesis of lipid A, a phosphorylated glycolipid that anchors the lipopolysaccharide to the outer membrane of the cell. The protein is Acyl-[acyl-carrier-protein]--UDP-N-acetylglucosamine O-acyltransferase of Chlamydia abortus (strain DSM 27085 / S26/3) (Chlamydophila abortus).